Here is a 591-residue protein sequence, read N- to C-terminus: Ferric-chelate reductase 1 (591 aa).

The chain crosses the membrane as a helical span at residues phenylalanine 6 to glycine 26. Positions leucine 13–proline 179 constitute a Reelin domain. N-linked (GlcNAc...) asparagine glycans are attached at residues asparagine 50, asparagine 85, asparagine 308, asparagine 321, and asparagine 353. The 116-residue stretch at glutamate 216 to glycine 331 folds into the DOMON domain. The 199-residue stretch at aspartate 335–histidine 533 folds into the Cytochrome b561 domain. A helical transmembrane segment spans residues valine 372–alanine 392. Residues histidine 373 and histidine 413 each contribute to the heme b site. 2 helical membrane-spanning segments follow: residues leucine 416–glycine 436 and histidine 445–phenylalanine 465. Heme b contacts are provided by histidine 445 and histidine 481. The next 3 helical transmembrane spans lie at isoleucine 490–proline 510, tyrosine 514–alanine 534, and valine 568–isoleucine 588.

Belongs to the FRRS1 family. Heme b serves as cofactor.

It is found in the membrane. Functionally, ferric-chelate reductases reduce Fe(3+) to Fe(2+) before its transport from the endosome to the cytoplasm. This Bos taurus (Bovine) protein is Ferric-chelate reductase 1 (FRRS1).